A 237-amino-acid chain; its full sequence is MVFGTLYTFPGDQCRTIAIKAVAKANGLDLDIRETPRTPDHLSISKLGKVPAFQGADSFKLFECMAIALYITSQNEQTTLLGKDKKEYAEIIKWMSFFNTEIVILMTQQLLPQLGVIPYDRDQVEFFANMTQRSVDVVEEYLQDRTFLVGDQLSLADLFCAGNISLGFQFFYGKAWRQQNPNVSRWYEMVCHQPIYAAVTDKFQLLDEPKLTNNPPEKKPETVPKNGAAVAIEATQA.

In terms of domain architecture, GST N-terminal spans Val2–Thr79. Residues Arg37, Lys49, Val50, Glu63, Cys64, and Asn99 each coordinate glutathione. Substrate is bound at residue Lys49. Residues Asp84 to Thr222 enclose the GST C-terminal domain. Gln108 provides a ligand contact to substrate. Residues Glu208–Thr222 are compositionally biased toward basic and acidic residues. Positions Glu208–Ala237 are disordered.

This sequence belongs to the GST superfamily. Requires glutathione as cofactor.

The protein operates within secondary metabolite biosynthesis. In terms of biological role, glutathione S-transferase; part of the gene cluster that mediates the biosynthesis of pseurotin A, a competitive inhibitor of chitin synthase and an inducer of nerve-cell proliferation. The PKS-NRPS hybrid synthetase psoA is responsible for the biosynthesis of azaspirene, one of the first intermediates having the 1-oxa-7-azaspiro[4,4]-non-2-ene-4,6-dione core of pseurotin, via condensation of one acetyl-CoA, 4 malonyl-CoA, and a L-phenylalanine molecule. The dual-functional monooxygenase/methyltransferase psoF seems to be involved in the addition of the C3 methyl group onto the pseurotin scaffold. Azaspirene is then converted to synerazol through 4 steps including oxidation of C17 by the cytochrome P450 monooxygenase psoD, O-methylation of the hydroxy group of C8 by the methyltransferase psoC, and the trans-to-cis isomerization of the C13 olefin by the glutathione S-transferase psoE. The fourth step of synerazol production is performed by the dual-functional monooxygenase/methyltransferase psoF which seems to catalyze the epoxidation of the intermediate deepoxy-synerazol. Synerazol can be attacked by a water molecule nonenzymatically at two different positions to yield two diol products, pseurotin A and pseurotin D. The chain is Glutathione S-transferase psoE from Aspergillus fumigatus (strain ATCC MYA-4609 / CBS 101355 / FGSC A1100 / Af293) (Neosartorya fumigata).